A 77-amino-acid chain; its full sequence is RNA-binding protein Hfq (77 aa).

The Sm domain occupies 9 to 68 (DPFLNALRKEHIPVAIYLVNGIKLQGQIESFDQFVILLKNTVSQMVYKHAISTVVPARAI).

This sequence belongs to the Hfq family. In terms of assembly, homohexamer.

In terms of biological role, RNA chaperone that binds small regulatory RNA (sRNAs) and mRNAs to facilitate mRNA translational regulation in response to envelope stress, environmental stress and changes in metabolite concentrations. Also binds with high specificity to tRNAs. The protein is RNA-binding protein Hfq of Psychromonas ingrahamii (strain DSM 17664 / CCUG 51855 / 37).